A 169-amino-acid chain; its full sequence is Peptide deformylase (169 aa).

Residues Cys91 and His133 each contribute to the Fe cation site. Glu134 is an active-site residue. A Fe cation-binding site is contributed by His137.

This sequence belongs to the polypeptide deformylase family. The cofactor is Fe(2+).

It carries out the reaction N-terminal N-formyl-L-methionyl-[peptide] + H2O = N-terminal L-methionyl-[peptide] + formate. In terms of biological role, removes the formyl group from the N-terminal Met of newly synthesized proteins. Requires at least a dipeptide for an efficient rate of reaction. N-terminal L-methionine is a prerequisite for activity but the enzyme has broad specificity at other positions. This chain is Peptide deformylase, found in Serratia proteamaculans (strain 568).